A 154-amino-acid polypeptide reads, in one-letter code: UPF0178 protein Sala_2376 (154 aa).

It belongs to the UPF0178 family.

This is UPF0178 protein Sala_2376 from Sphingopyxis alaskensis (strain DSM 13593 / LMG 18877 / RB2256) (Sphingomonas alaskensis).